The chain runs to 405 residues: MNKTILWSFLLFFSGSQTSRATDQKIADFAVDLYKAISLSHKNNIIFSPLGTTMLLGMVQLGAKGKAQQQILKTLRMRGTPAGEEFSVLKSLFSAISKKKQEFTFNLASALYLQEGFIVKETYLHSNKEFFQSATKLVDFLDAKTSAQAISTWVESKTDGKIKNMFSEEEFGPLTRLVLVNAIYFKGDWKQKFRKEDTEMTDFTKKDGSTVKVPMMKALLRAQYGYFSQSSMTCQVLELPYKADEFSLVIILPTEDTSIEEVENQVTAPHVRRWFSELHEEEVEVSLPRFKIEQKLDLKEALYSLNVTEIFSGGCDLSGITDSSEVYVSRVMQKVFFEINEDGSEAAASTGINIPAIMSLTQTQFLANHPFLFILKHIRTESILFMGKVTDPDIQTTKGRDLDSL.

The N-terminal stretch at 1–18 (MNKTILWSFLLFFSGSQT) is a signal peptide. N-linked (GlcNAc...) asparagine glycosylation occurs at N306.

The protein belongs to the serpin family. As to expression, expressed in pancreas.

The protein resides in the secreted. The sequence is that of Serpin I2 (Serpini2) from Mus musculus (Mouse).